We begin with the raw amino-acid sequence, 333 residues long: MKSILEQLSSMTVVVADTGDLDSIKKFQPRDATTNPSLILAAAKNPDYVKLIDKSLESSENALPQGFTEIDLIKETVDQVSVFFGKEILKIISGRVSTEVDARLSFDTQATVEKARKLINLYKNFGIEKERILIKIAATWEGIKAAEILEKEGIKCNLTLLFNFCQAVTCANAKITLISPFVGRILDWHKAKTGKTSFVGAEDPGVISVTQIYKYFKEKGFKTEVMGASFRNLDEIKELAGCDLLTIAPKFLEELKKEKGELVRKLDVSTQINHSIDYEFEEKDFRLSMLEDQMASEKLSEGITGFSKAIEELEELLLKRYSEIKNHKLISAN.

K135 (schiff-base intermediate with substrate) is an active-site residue.

Belongs to the transaldolase family. Type 1 subfamily. Homodimer.

The protein localises to the cytoplasm. It carries out the reaction D-sedoheptulose 7-phosphate + D-glyceraldehyde 3-phosphate = D-erythrose 4-phosphate + beta-D-fructose 6-phosphate. It functions in the pathway carbohydrate degradation; pentose phosphate pathway; D-glyceraldehyde 3-phosphate and beta-D-fructose 6-phosphate from D-ribose 5-phosphate and D-xylulose 5-phosphate (non-oxidative stage): step 2/3. Its function is as follows. Transaldolase is important for the balance of metabolites in the pentose-phosphate pathway. The sequence is that of Transaldolase from Prochlorococcus marinus (strain MIT 9301).